A 732-amino-acid chain; its full sequence is Catalase-peroxidase (732 aa).

Positions 1-24 are disordered; sequence MDAKTDDNSAGKCPVAHGSAGRTN. The segment at residues 96 to 219 is a cross-link (tryptophyl-tyrosyl-methioninium (Trp-Tyr) (with M-245)); sequence WHSAGTYRIA…LGAVQMGLIY (124 aa). The active-site Proton acceptor is the histidine 97. Residues 219 to 245 constitute a cross-link (tryptophyl-tyrosyl-methioninium (Tyr-Met) (with W-96)); sequence YVNPEGPNGNPDPLAAARDIRDTFARM. Histidine 260 contacts heme b.

It belongs to the peroxidase family. Peroxidase/catalase subfamily. In terms of assembly, homodimer or homotetramer. It depends on heme b as a cofactor. Post-translationally, formation of the three residue Trp-Tyr-Met cross-link is important for the catalase, but not the peroxidase activity of the enzyme.

It carries out the reaction H2O2 + AH2 = A + 2 H2O. It catalyses the reaction 2 H2O2 = O2 + 2 H2O. In terms of biological role, bifunctional enzyme with both catalase and broad-spectrum peroxidase activity. The protein is Catalase-peroxidase of Mesorhizobium japonicum (strain LMG 29417 / CECT 9101 / MAFF 303099) (Mesorhizobium loti (strain MAFF 303099)).